Here is a 215-residue protein sequence, read N- to C-terminus: Pyridoxine/pyridoxamine 5'-phosphate oxidase (215 aa).

Substrate-binding positions include 8 to 11 (RQEY) and Lys-66. Residues 61 to 66 (RIVLLK), 76 to 77 (YT), Arg-82, Lys-83, and Gln-105 contribute to the FMN site. 2 residues coordinate substrate: Tyr-123 and Arg-127. Residues 140 to 141 (QS) and Trp-186 contribute to the FMN site. 192 to 194 (RLH) contacts substrate. Arg-196 contacts FMN.

The protein belongs to the pyridoxamine 5'-phosphate oxidase family. As to quaternary structure, homodimer. It depends on FMN as a cofactor.

It catalyses the reaction pyridoxamine 5'-phosphate + O2 + H2O = pyridoxal 5'-phosphate + H2O2 + NH4(+). The enzyme catalyses pyridoxine 5'-phosphate + O2 = pyridoxal 5'-phosphate + H2O2. It functions in the pathway cofactor metabolism; pyridoxal 5'-phosphate salvage; pyridoxal 5'-phosphate from pyridoxamine 5'-phosphate: step 1/1. The protein operates within cofactor metabolism; pyridoxal 5'-phosphate salvage; pyridoxal 5'-phosphate from pyridoxine 5'-phosphate: step 1/1. Functionally, catalyzes the oxidation of either pyridoxine 5'-phosphate (PNP) or pyridoxamine 5'-phosphate (PMP) into pyridoxal 5'-phosphate (PLP). The polypeptide is Pyridoxine/pyridoxamine 5'-phosphate oxidase (Salinibacter ruber (strain DSM 13855 / M31)).